A 71-amino-acid chain; its full sequence is U-scoloptoxin(21)-Sm1a (71 aa).

The first 21 residues, 1–21, serve as a signal peptide directing secretion; that stretch reads MKSVIFALFLVYLLIVRAAEA. Residues 45-71 form a disordered region; the sequence is IELANDPNGPGRRRRAPAENEDFLKHS. Residues 60–71 are compositionally biased toward basic and acidic residues; that stretch reads APAENEDFLKHS.

Belongs to the scoloptoxin-21 family. Expressed by the venom gland.

Its subcellular location is the secreted. The polypeptide is U-scoloptoxin(21)-Sm1a (Scolopendra morsitans (Tanzanian blue ringleg centipede)).